The following is a 273-amino-acid chain: Glutamate racemase (273 aa).

Residues 19-20 (DS) and 51-52 (YG) contribute to the substrate site. Catalysis depends on Cys83, which acts as the Proton donor/acceptor. Substrate is bound at residue 84-85 (NT). The Proton donor/acceptor role is filled by Cys198. Residue 199-200 (TH) participates in substrate binding.

It belongs to the aspartate/glutamate racemases family.

It catalyses the reaction L-glutamate = D-glutamate. It functions in the pathway cell wall biogenesis; peptidoglycan biosynthesis. In terms of biological role, provides the (R)-glutamate required for cell wall biosynthesis. This is Glutamate racemase from Agrobacterium fabrum (strain C58 / ATCC 33970) (Agrobacterium tumefaciens (strain C58)).